Reading from the N-terminus, the 463-residue chain is Asparagine--tRNA ligase (463 aa).

This sequence belongs to the class-II aminoacyl-tRNA synthetase family. Homodimer.

It is found in the cytoplasm. The catalysed reaction is tRNA(Asn) + L-asparagine + ATP = L-asparaginyl-tRNA(Asn) + AMP + diphosphate + H(+). The chain is Asparagine--tRNA ligase from Alkaliphilus metalliredigens (strain QYMF).